The primary structure comprises 239 residues: MKKTTRRTAGGRGGAGSHELYQRVKKKAGTIKASSRRWLERHLNDPYVHQSKADGYRSRAAYKLIEINERYKILKKGQKIIDLGAAPGGWCQVAARLVESKDYNPSVVGIDYLHMEPLPGVAILEMDFFHEDAPQELISTLGSKPDVVLSDMAAPTTGHRQTDHLRTIALCEAAVHFSISVLKPGGHFLTKTFQGGAEGNLLATLKQNFKKVHHVKPPASRAESVELYLLALQFKGKTD.

The S-adenosyl-L-methionine site is built by G88, W90, D111, D127, and D151. The active-site Proton acceptor is K191.

The protein belongs to the class I-like SAM-binding methyltransferase superfamily. RNA methyltransferase RlmE family.

Its subcellular location is the cytoplasm. The enzyme catalyses uridine(2552) in 23S rRNA + S-adenosyl-L-methionine = 2'-O-methyluridine(2552) in 23S rRNA + S-adenosyl-L-homocysteine + H(+). Functionally, specifically methylates the uridine in position 2552 of 23S rRNA at the 2'-O position of the ribose in the fully assembled 50S ribosomal subunit. The sequence is that of Ribosomal RNA large subunit methyltransferase E from Bartonella bacilliformis (strain ATCC 35685 / KC583 / Herrer 020/F12,63).